Reading from the N-terminus, the 209-residue chain is MKTSKWIDISQPLNNDIATWPGDTPFSYEVLWSKEESGSVNVGKLTMSIHTGTHIDAPFHFDNDGKKVLDLDIQVYVGPTRIIDVSNLESIGKKELEKFHLEGVERLLLRTSSHGKANEFPDIIPHLRADIAPFLSEKGIRLIGVDVPSVDPLDDKELAAHHQLFKHSIHILENVVLDHVADGDYELIALPLALSDADGSPVRAVIRPI.

W20 serves as a coordination point for substrate. Zn(2+)-binding residues include H50, H54, and D56. Residue H60 is the Proton donor/acceptor of the active site. H161 and E173 together coordinate Zn(2+).

It belongs to the Cyclase 1 superfamily. KynB family. In terms of assembly, homodimer. Zn(2+) serves as cofactor.

The catalysed reaction is N-formyl-L-kynurenine + H2O = L-kynurenine + formate + H(+). It participates in amino-acid degradation; L-tryptophan degradation via kynurenine pathway; L-kynurenine from L-tryptophan: step 2/2. Its function is as follows. Catalyzes the hydrolysis of N-formyl-L-kynurenine to L-kynurenine, the second step in the kynurenine pathway of tryptophan degradation. The protein is Kynurenine formamidase of Bacillus anthracis.